Reading from the N-terminus, the 684-residue chain is DNA-directed RNA polymerase subunit beta' (684 aa).

Zn(2+) is bound by residues C69, C71, C87, and C90. Mg(2+) is bound by residues D489, D491, and D493.

The protein belongs to the RNA polymerase beta' chain family. RpoC1 subfamily. In terms of assembly, in plastids the minimal PEP RNA polymerase catalytic core is composed of four subunits: alpha, beta, beta', and beta''. When a (nuclear-encoded) sigma factor is associated with the core the holoenzyme is formed, which can initiate transcription. It depends on Mg(2+) as a cofactor. Zn(2+) is required as a cofactor.

The protein resides in the plastid. The protein localises to the chloroplast. The catalysed reaction is RNA(n) + a ribonucleoside 5'-triphosphate = RNA(n+1) + diphosphate. Its function is as follows. DNA-dependent RNA polymerase catalyzes the transcription of DNA into RNA using the four ribonucleoside triphosphates as substrates. The sequence is that of DNA-directed RNA polymerase subunit beta' from Marchantia polymorpha (Common liverwort).